Here is a 352-residue protein sequence, read N- to C-terminus: C-X-C chemokine receptor type 4 (352 aa).

The segment at 1 to 21 (MEGISIYTSDNYTEEMGSGDY) is important for chemokine binding and signaling. Residues 1–38 (MEGISIYTSDNYTEEMGSGDYDSIKEPCFREENAHFNR) lie on the Extracellular side of the membrane. At Y7 the chain carries Sulfotyrosine. An N-linked (GlcNAc...) asparagine glycan is attached at N11. Y12 carries the post-translational modification Sulfotyrosine. O-linked (Xyl...) (chondroitin sulfate) serine glycosylation is present at S18. Position 21 is a sulfotyrosine (Y21). Cystine bridges form between C28–C274 and C109–C186. The chain crosses the membrane as a helical span at residues 39-63 (IFLPTIYSIIFLTGIVGNGLVILVM). Residues 64–77 (GYQKKLRSMTDKYR) lie on the Cytoplasmic side of the membrane. Residues 78–99 (LHLSVADLLFVITLPFWAVDAV) traverse the membrane as a helical segment. The interval 94–97 (WAVD) is chemokine binding. The Extracellular segment spans residues 100-110 (ANWYFGKFLCK). The chain crosses the membrane as a helical span at residues 111–130 (AVHVIYTVNLYSSVLILAFI). A chemokine binding region spans residues 113 to 117 (HVIYT). The Cytoplasmic portion of the chain corresponds to 131-154 (SLDRYLAIVHATNSQRPRKLLAEK). The Important for signaling signature appears at 133–135 (DRY). The segment at 135 to 147 (YLAIVHATNSQRP) is involved in dimerization; when bound to chemokine. The chain crosses the membrane as a helical span at residues 155 to 174 (VVYVGVWIPALLLTIPDFIF). Residues 175 to 195 (ANVSEADDRYICDRFYPNDLW) are Extracellular-facing. Residues 186 to 190 (CDRFY) are chemokine binding, important for signaling. An involved in dimerization region spans residues 191 to 210 (PNDLWVVVFQFQHIMVGLIL). Residues 196-216 (VVVFQFQHIMVGLILPGIVIL) traverse the membrane as a helical segment. Residues 217 to 241 (SCYCIIISKLSHSKGHQKRKALKTT) lie on the Cytoplasmic side of the membrane. The helical transmembrane segment at 242 to 261 (VILILAFFACWLPYYIGISI) threads the bilayer. The Extracellular portion of the chain corresponds to 262-282 (DSFILLEIIRQGCEFENTVHK). The segment at 266 to 268 (LLE) is involved in dimerization. The chain crosses the membrane as a helical span at residues 283–302 (WISITEALAFFHCCLNPILY). Topologically, residues 303–352 (AFLGAKFKTSAQHALTSVSRGSSLKILSKGKRGGHSSVSTESESSSFHSS) are cytoplasmic. A phosphoserine mark is found at S319 and S321. Phosphoserine; by PKC and GRK6 occurs at positions 324 and 325. The interval 329–352 (LSKGKRGGHSSVSTESESSSFHSS) is disordered. S330 carries the post-translational modification Phosphoserine; by GRK6. Residue K331 forms a Glycyl lysine isopeptide (Lys-Gly) (interchain with G-Cter in ubiquitin) linkage. Residues 337–352 (HSSVSTESESSSFHSS) are compositionally biased toward low complexity. S339 is subject to Phosphoserine; by GRK6. S348 and S351 each carry phosphoserine.

This sequence belongs to the G-protein coupled receptor 1 family. In terms of assembly, monomer. Can form homodimers. Interacts with CD164. Interacts with ARRB2; the interaction is dependent on the C-terminal phosphorylation of CXCR4 and allows activation of MAPK1 and MAPK3. Interacts with ARR3; the interaction is dependent on the C-terminal phosphorylation of CXCR4 and modulates calcium mobilization. Interacts with RNF113A; the interaction, enhanced by CXCL12, promotes CXCR4 ubiquitination and subsequent degradation. Interacts (via the cytoplasmic C-terminal) with ITCH (via the WW domains I and II); the interaction, enhanced by CXCL12, promotes CXCR4 ubiquitination and leads to its degradation. Interacts with extracellular ubiquitin. Interacts with DBN1; this interaction is enhanced by antigenic stimulation. Following LPS binding, may form a complex with GDF5, HSP90AA1 and HSPA8. In terms of processing, phosphorylated on agonist stimulation. Rapidly phosphorylated on serine and threonine residues in the C-terminal. Phosphorylation at Ser-324 and Ser-325 leads to recruitment of ITCH, ubiquitination and protein degradation. Ubiquitinated after ligand binding, leading to its degradation. Ubiquitinated by ITCH at the cell membrane on agonist stimulation. The ubiquitin-dependent mechanism, endosomal sorting complex required for transport (ESCRT), then targets CXCR4 for lysosomal degradation. This process is dependent also on prior Ser-/Thr-phosphorylation in the C-terminal of CXCR4. Also binding of ARRB1 to STAM negatively regulates CXCR4 sorting to lysosomes though modulating ubiquitination of SFR5S. Post-translationally, sulfation is required for efficient binding of CXCL12/SDF-1alpha and promotes its dimerization. In terms of processing, O- and N-glycosylated. N-glycosylation can mask coreceptor function. The O-glycosylation chondroitin sulfate attachment does not affect interaction with CXCL12/SDF-1alpha nor its coreceptor activity.

The protein localises to the cell membrane. The protein resides in the cell junction. It localises to the early endosome. Its subcellular location is the late endosome. It is found in the lysosome. Receptor for the C-X-C chemokine CXCL12/SDF-1 that transduces a signal by increasing intracellular calcium ion levels and enhancing MAPK1/MAPK3 activation. Involved in the AKT signaling cascade. Plays a role in regulation of cell migration, e.g. during wound healing. Acts as a receptor for extracellular ubiquitin; leading to enhanced intracellular calcium ions and reduced cellular cAMP levels. Binds bacterial lipopolysaccharide (LPS) et mediates LPS-induced inflammatory response, including TNF secretion by monocytes. Involved in hematopoiesis and in cardiac ventricular septum formation. Also plays an essential role in vascularization of the gastrointestinal tract, probably by regulating vascular branching and/or remodeling processes in endothelial cells. Involved in cerebellar development. In the CNS, could mediate hippocampal-neuron survival. The protein is C-X-C chemokine receptor type 4 (CXCR4) of Saimiri sciureus (Common squirrel monkey).